A 145-amino-acid chain; its full sequence is Large ribosomal subunit protein uL15 (145 aa).

The segment covering Met1–Gly11 has biased composition (polar residues). The tract at residues Met1–Phe48 is disordered. The segment covering Lys14–Gly26 has biased composition (basic residues).

This sequence belongs to the universal ribosomal protein uL15 family. In terms of assembly, part of the 50S ribosomal subunit.

Functionally, binds to the 23S rRNA. In Mycoplasmopsis pulmonis (strain UAB CTIP) (Mycoplasma pulmonis), this protein is Large ribosomal subunit protein uL15.